Consider the following 513-residue polypeptide: ATP synthase subunit alpha 1 (513 aa).

169–176 (GDRQTGKT) lines the ATP pocket.

It belongs to the ATPase alpha/beta chains family. As to quaternary structure, F-type ATPases have 2 components, CF(1) - the catalytic core - and CF(0) - the membrane proton channel. CF(1) has five subunits: alpha(3), beta(3), gamma(1), delta(1), epsilon(1). CF(0) has three main subunits: a(1), b(2) and c(9-12). The alpha and beta chains form an alternating ring which encloses part of the gamma chain. CF(1) is attached to CF(0) by a central stalk formed by the gamma and epsilon chains, while a peripheral stalk is formed by the delta and b chains.

It is found in the cell inner membrane. It catalyses the reaction ATP + H2O + 4 H(+)(in) = ADP + phosphate + 5 H(+)(out). Functionally, produces ATP from ADP in the presence of a proton gradient across the membrane. The alpha chain is a regulatory subunit. This is ATP synthase subunit alpha 1 from Photobacterium profundum (strain SS9).